Consider the following 132-residue polypeptide: Female-specific protein 800 (132 aa).

FS800 is likely to have some function in the production or maintenance of the schistosome egg. It may have a function unrelated to eggshell formation. This is Female-specific protein 800 from Schistosoma mansoni (Blood fluke).